The sequence spans 304 residues: GTPase Era (304 aa).

In terms of domain architecture, Era-type G spans 9 to 177 (HSGFVAIVGR…VTTLSQHMPE (169 aa)). The segment at 17-24 (GRPNVGKS) is G1. 17–24 (GRPNVGKS) is a binding site for GTP. The interval 43–47 (QTTRN) is G2. The tract at residues 64–67 (DTPG) is G3. GTP contacts are provided by residues 64–68 (DTPGI) and 127–130 (NKID). Residues 127 to 130 (NKID) form a G4 region. Positions 156-158 (ISA) are G5. A KH type-2 domain is found at 208–285 (TRQEVPHSVA…YLELWVKVSE (78 aa)).

This sequence belongs to the TRAFAC class TrmE-Era-EngA-EngB-Septin-like GTPase superfamily. Era GTPase family. Monomer.

It is found in the cytoplasm. Its subcellular location is the cell membrane. Its function is as follows. An essential GTPase that binds both GDP and GTP, with rapid nucleotide exchange. Plays a role in 16S rRNA processing and 30S ribosomal subunit biogenesis and possibly also in cell cycle regulation and energy metabolism. The protein is GTPase Era of Pediococcus pentosaceus (strain ATCC 25745 / CCUG 21536 / LMG 10740 / 183-1w).